Reading from the N-terminus, the 253-residue chain is Imidazole glycerol phosphate synthase subunit HisF (253 aa).

Active-site residues include Asp11 and Asp130.

Belongs to the HisA/HisF family. As to quaternary structure, heterodimer of HisH and HisF.

It localises to the cytoplasm. The enzyme catalyses 5-[(5-phospho-1-deoxy-D-ribulos-1-ylimino)methylamino]-1-(5-phospho-beta-D-ribosyl)imidazole-4-carboxamide + L-glutamine = D-erythro-1-(imidazol-4-yl)glycerol 3-phosphate + 5-amino-1-(5-phospho-beta-D-ribosyl)imidazole-4-carboxamide + L-glutamate + H(+). Its pathway is amino-acid biosynthesis; L-histidine biosynthesis; L-histidine from 5-phospho-alpha-D-ribose 1-diphosphate: step 5/9. Functionally, IGPS catalyzes the conversion of PRFAR and glutamine to IGP, AICAR and glutamate. The HisF subunit catalyzes the cyclization activity that produces IGP and AICAR from PRFAR using the ammonia provided by the HisH subunit. The protein is Imidazole glycerol phosphate synthase subunit HisF of Caldanaerobacter subterraneus subsp. tengcongensis (strain DSM 15242 / JCM 11007 / NBRC 100824 / MB4) (Thermoanaerobacter tengcongensis).